The chain runs to 35 residues: Photosystem II reaction center protein Psb30 (35 aa).

Residues 6 to 26 traverse the membrane as a helical segment; that stretch reads VIVQLVFLALIITTGPVIIVY.

This sequence belongs to the Psb30/Ycf12 family. PSII is composed of 1 copy each of membrane proteins PsbA, PsbB, PsbC, PsbD, PsbE, PsbF, PsbH, PsbI, PsbJ, PsbK, PsbL, PsbM, PsbT, PsbY, PsbZ, Psb30/Ycf12, peripheral proteins of the oxygen-evolving complex and a large number of cofactors. It forms dimeric complexes.

It is found in the plastid. The protein resides in the chloroplast thylakoid membrane. Its function is as follows. A core subunit of photosystem II (PSII), probably helps stabilize the reaction center. The sequence is that of Photosystem II reaction center protein Psb30 from Cyanidium caldarium (Red alga).